The sequence spans 213 residues: MVLRYSYVFKQPVNYSNIELNEIKNIKDEKVRQNSIFISYLNGLYNSLNVLEMVSISGSLPSKLIQSIFKIILSNYDYNAIGKHFKTESILIGESLFKWPSPRIQQFDQFFFQDYLYSSPENYKGSLVGVNEYSMVWTLGIILYQCLTGELPFPTYPKIVNFITSSSQNVEIPPQFYKPENSLLIQLITCCLFKNPAQRISWNEIVNHSFFKN.

Positions 1-211 constitute a Protein kinase domain; the sequence is MVLRYSYVFK…WNEIVNHSFF (211 aa).

The protein belongs to the protein kinase superfamily. Ser/Thr protein kinase family.

The sequence is that of Probable inactive serine/threonine-protein kinase DDB_G0280559 from Dictyostelium discoideum (Social amoeba).